The primary structure comprises 60 residues: Cytotoxin KJC3 (60 aa).

4 disulfide bridges follow: Cys3-Cys21, Cys14-Cys38, Cys42-Cys53, and Cys54-Cys59.

The protein belongs to the three-finger toxin family. Short-chain subfamily. Type IA cytotoxin sub-subfamily. In terms of assembly, monomer in solution; Homodimer and oligomer in the presence of negatively charged lipids forming a pore with a size ranging between 20 and 30 Angstroms. In terms of tissue distribution, expressed by the venom gland.

It is found in the secreted. The protein localises to the target cell membrane. Functionally, shows cytolytic activity on many different cells by forming pore in lipid membranes. In vivo, increases heart rate or kills the animal by cardiac arrest. In addition, it binds to heparin with high affinity, interacts with Kv channel-interacting protein 1 (KCNIP1) in a calcium-independent manner, and binds to integrin alpha-V/beta-3 (ITGAV/ITGB3) with moderate affinity. This chain is Cytotoxin KJC3, found in Naja sputatrix (Malayan spitting cobra).